Reading from the N-terminus, the 89-residue chain is uncharacterized protein (89 aa).

To M.jannaschii MJ1436.

This is an uncharacterized protein from Methanothermobacter thermautotrophicus (strain ATCC 29096 / DSM 1053 / JCM 10044 / NBRC 100330 / Delta H) (Methanobacterium thermoautotrophicum).